Reading from the N-terminus, the 284-residue chain is Protoheme IX farnesyltransferase (284 aa).

Helical transmembrane passes span 2-19 (SLVV…PVTV), 23-45 (IALT…NMWS), 69-89 (GEAL…LGLA), 92-112 (LFAA…YSMW), 121-141 (IVIG…VATG), 148-168 (LFMF…LALF), 194-214 (VLVY…TGTG), 217-237 (LYLA…VRTW), and 263-283 (LFLH…GLGG).

It belongs to the UbiA prenyltransferase family. Protoheme IX farnesyltransferase subfamily. As to quaternary structure, interacts with CtaA.

The protein resides in the cell inner membrane. It catalyses the reaction heme b + (2E,6E)-farnesyl diphosphate + H2O = Fe(II)-heme o + diphosphate. It functions in the pathway porphyrin-containing compound metabolism; heme O biosynthesis; heme O from protoheme: step 1/1. Converts heme B (protoheme IX) to heme O by substitution of the vinyl group on carbon 2 of heme B porphyrin ring with a hydroxyethyl farnesyl side group. The polypeptide is Protoheme IX farnesyltransferase (Cereibacter sphaeroides (Rhodobacter sphaeroides)).